The following is a 324-amino-acid chain: Glyoxylate/hydroxypyruvate reductase B (324 aa).

Residues R237 and E266 contribute to the active site. H285 serves as the catalytic Proton donor.

It belongs to the D-isomer specific 2-hydroxyacid dehydrogenase family. GhrB subfamily. In terms of assembly, homodimer.

The protein localises to the cytoplasm. The catalysed reaction is glycolate + NADP(+) = glyoxylate + NADPH + H(+). The enzyme catalyses (R)-glycerate + NAD(+) = 3-hydroxypyruvate + NADH + H(+). It carries out the reaction (R)-glycerate + NADP(+) = 3-hydroxypyruvate + NADPH + H(+). In terms of biological role, catalyzes the NADPH-dependent reduction of glyoxylate and hydroxypyruvate into glycolate and glycerate, respectively. In Salmonella choleraesuis (strain SC-B67), this protein is Glyoxylate/hydroxypyruvate reductase B.